We begin with the raw amino-acid sequence, 110 residues long: U-scoloptoxin(16)-Er6a (110 aa).

Residues 1 to 26 form the signal peptide; it reads MTSTRKLSVSCLIVFMVSSLIAVSSG.

It belongs to the scoloptoxin-16 family. Contains 4 disulfide bonds. As to expression, expressed by the venom gland.

It localises to the secreted. The polypeptide is U-scoloptoxin(16)-Er6a (Ethmostigmus rubripes (Giant centipede)).